A 597-amino-acid chain; its full sequence is Zinc finger CCCH domain-containing protein 29 (597 aa).

ANK repeat units follow at residues 76–106 and 111–143; these read EERT…DVNR and EKVT…SPNC. 2 C3H1-type zinc fingers span residues 254–281 and 289–313; these read PYTC…HGVF and QYRT…HRRD. Positions 320-337 are enriched in polar residues; sequence ASTGSAMVSPRSSNQSPE. The tract at residues 320–341 is disordered; sequence ASTGSAMVSPRSSNQSPEMSVM.

Expressed in roots and anthers.

The protein localises to the nucleus. Functionally, involved in salt stress response. May positively modulate plant tolerance to salt stress. This chain is Zinc finger CCCH domain-containing protein 29, found in Arabidopsis thaliana (Mouse-ear cress).